A 126-amino-acid polypeptide reads, in one-letter code: Probable 4-amino-4-deoxy-L-arabinose-phosphoundecaprenol flippase subunit ArnF (126 aa).

A helical membrane pass occupies residues 1–21 (MGFFWALLSVGLVSAAQLLLR). At 22–47 (SAMVALPPLTDIVAFLQHLLHFQPGT) the chain is on the periplasmic side. Residues 48 to 68 (FGLFFGLLGYLLSMVCWYFAL) traverse the membrane as a helical segment. The Cytoplasmic segment spans residues 69–76 (HRLPLSKA). Residues 77 to 97 (YALLSLSYILVWAAAIWLPGW) form a helical membrane-spanning segment. The Periplasmic segment spans residues 98 to 100 (HEP). Residues 101–121 (FYWQSLLGVAIIVAGVLTIFW) traverse the membrane as a helical segment. Residues 122–126 (PVKRR) are Cytoplasmic-facing.

This sequence belongs to the ArnF family. In terms of assembly, heterodimer of ArnE and ArnF.

It localises to the cell inner membrane. It functions in the pathway bacterial outer membrane biogenesis; lipopolysaccharide biosynthesis. Functionally, translocates 4-amino-4-deoxy-L-arabinose-phosphoundecaprenol (alpha-L-Ara4N-phosphoundecaprenol) from the cytoplasmic to the periplasmic side of the inner membrane. The sequence is that of Probable 4-amino-4-deoxy-L-arabinose-phosphoundecaprenol flippase subunit ArnF from Klebsiella pneumoniae subsp. pneumoniae (strain ATCC 700721 / MGH 78578).